A 1550-amino-acid polypeptide reads, in one-letter code: Pentafunctional AROM polypeptide (1550 aa).

The interval 1 to 379 (MSIERVPILG…YQLKAHQVSK (379 aa)) is 3-dehydroquinate synthase. NAD(+) contacts are provided by residues 42–44 (DTN), 80–83 (ENNK), 111–113 (GGV), and Asp116. Arg127 contributes to the 7-phospho-2-dehydro-3-deoxy-D-arabino-heptonate binding site. 136–137 (TT) serves as a coordination point for NAD(+). 2 residues coordinate 7-phospho-2-dehydro-3-deoxy-D-arabino-heptonate: Asp143 and Lys149. Lys158 provides a ligand contact to NAD(+). Asn159 lines the 7-phospho-2-dehydro-3-deoxy-D-arabino-heptonate pocket. NAD(+) contacts are provided by residues 176 to 179 (FLET) and Asn187. Position 191 (Glu191) interacts with Zn(2+). Residues 191–194 (EVVK) and Lys243 contribute to the 7-phospho-2-dehydro-3-deoxy-D-arabino-heptonate site. The active-site Proton acceptor; for 3-dehydroquinate synthase activity is the Glu253. 7-phospho-2-dehydro-3-deoxy-D-arabino-heptonate is bound by residues 257–261 (RNLLN) and His264. His264 is a binding site for Zn(2+). The Proton acceptor; for 3-dehydroquinate synthase activity role is filled by His268. The 7-phospho-2-dehydro-3-deoxy-D-arabino-heptonate site is built by His280 and Lys351. His280 is a Zn(2+) binding site. Residues 392 to 837 (VHPFTNPPKE…WDILHSKFKI (446 aa)) are EPSP synthase. Residues 857–1047 (DKGVIVIGMR…VPTGRSTAVV (191 aa)) form a shikimate kinase region. 864 to 871 (GMRGTGKS) is an ATP binding site. The interval 1048 to 1257 (LTLPDLNNVA…NDDGLLTIGE (210 aa)) is 3-dehydroquinase. Arg1193 functions as the Schiff-base intermediate with substrate; for 3-dehydroquinate dehydratase activity in the catalytic mechanism. The interval 1270 to 1550 (AKKFWVIGSP…EIIHRAVVEE (281 aa)) is shikimate dehydrogenase.

The protein in the N-terminal section; belongs to the sugar phosphate cyclases superfamily. Dehydroquinate synthase family. It in the 2nd section; belongs to the EPSP synthase family. This sequence in the 3rd section; belongs to the shikimate kinase family. In the 4th section; belongs to the type-I 3-dehydroquinase family. The protein in the C-terminal section; belongs to the shikimate dehydrogenase family. In terms of assembly, homodimer. Zn(2+) serves as cofactor.

Its subcellular location is the cytoplasm. It catalyses the reaction 7-phospho-2-dehydro-3-deoxy-D-arabino-heptonate = 3-dehydroquinate + phosphate. The enzyme catalyses 3-dehydroquinate = 3-dehydroshikimate + H2O. The catalysed reaction is shikimate + NADP(+) = 3-dehydroshikimate + NADPH + H(+). It carries out the reaction shikimate + ATP = 3-phosphoshikimate + ADP + H(+). It catalyses the reaction 3-phosphoshikimate + phosphoenolpyruvate = 5-O-(1-carboxyvinyl)-3-phosphoshikimate + phosphate. Its pathway is metabolic intermediate biosynthesis; chorismate biosynthesis; chorismate from D-erythrose 4-phosphate and phosphoenolpyruvate: step 2/7. It participates in metabolic intermediate biosynthesis; chorismate biosynthesis; chorismate from D-erythrose 4-phosphate and phosphoenolpyruvate: step 3/7. The protein operates within metabolic intermediate biosynthesis; chorismate biosynthesis; chorismate from D-erythrose 4-phosphate and phosphoenolpyruvate: step 4/7. It functions in the pathway metabolic intermediate biosynthesis; chorismate biosynthesis; chorismate from D-erythrose 4-phosphate and phosphoenolpyruvate: step 5/7. Its pathway is metabolic intermediate biosynthesis; chorismate biosynthesis; chorismate from D-erythrose 4-phosphate and phosphoenolpyruvate: step 6/7. The AROM polypeptide catalyzes 5 consecutive enzymatic reactions in prechorismate polyaromatic amino acid biosynthesis. This Candida dubliniensis (strain CD36 / ATCC MYA-646 / CBS 7987 / NCPF 3949 / NRRL Y-17841) (Yeast) protein is Pentafunctional AROM polypeptide.